We begin with the raw amino-acid sequence, 573 residues long: Squalene monooxygenase (573 aa).

Residues 1-19 (MWTFLGIATFTYFYKKCGD) lie on the Cytoplasmic side of the membrane. Residues 1 to 99 (MWTFLGIATF…EQLESKRRRK (99 aa)) form an interaction with MARCHF6 region. An intramembrane segment occupies 20 to 40 (VTLANKELLLCVLVFLSLGLV). Residues 41 to 573 (LSYRCRHRNG…IYSEMKYLVH (533 aa)) are Cytoplasmic-facing. The tract at residues 61 to 72 (QFAAFSDILSAL) is required for degradation in response to high membrane cholesterol levels. Positions 100-573 (EVNLSETTLT…IYSEMKYLVH (474 aa)) are sufficient for catalytic activity. FAD is bound by residues 132–133 (VL), 152–153 (ER), R160, R233, V249, D407, and M420. The tract at residues 515–573 (PLLLIRHFFSVAVYATYFCFKSEPWATKPRALFSSGAILYKACSIIFPLIYSEMKYLVH) is hydrophobic; mediates interaction with membranes.

The protein belongs to the squalene monooxygenase family. Interacts (via N-terminal domain) with MARCHF6. Interacts with SMIM22; this interaction modulates lipid droplet formation. The cofactor is FAD. Post-translationally, ubiquitinated by MARCHF6 in response to high cholesterol levels in intracellular membranes, leading to proteasomal degradation. As to expression, detected in lever (at protein level).

The protein localises to the microsome membrane. It is found in the endoplasmic reticulum membrane. The enzyme catalyses squalene + reduced [NADPH--hemoprotein reductase] + O2 = (S)-2,3-epoxysqualene + oxidized [NADPH--hemoprotein reductase] + H2O + H(+). It participates in terpene metabolism; lanosterol biosynthesis; lanosterol from farnesyl diphosphate: step 2/3. With respect to regulation, inhibited by NB-598 ((E)N-ethyl-N-(6,6-dimethyl-2-hepten-4-ynyl)-3-[(3,3'-bi-thiophen-5-yl)methoxy]benzene-methanamine). Contrary to fungal enzymes, the mammalian enzyme is only slightly inhibited by terbinafine. In terms of biological role, catalyzes the stereospecific oxidation of squalene to (S)-2,3-epoxysqualene, and is considered to be a rate-limiting enzyme in steroid biosynthesis. The chain is Squalene monooxygenase (Sqle) from Rattus norvegicus (Rat).